A 201-amino-acid polypeptide reads, in one-letter code: Peptidyl-tRNA hydrolase (201 aa).

Residue Tyr-17 participates in tRNA binding. Residue His-22 is the Proton acceptor of the active site. TRNA-binding residues include Tyr-68, Asn-70, and Asn-116.

It belongs to the PTH family. Monomer.

It localises to the cytoplasm. The enzyme catalyses an N-acyl-L-alpha-aminoacyl-tRNA + H2O = an N-acyl-L-amino acid + a tRNA + H(+). Functionally, hydrolyzes ribosome-free peptidyl-tRNAs (with 1 or more amino acids incorporated), which drop off the ribosome during protein synthesis, or as a result of ribosome stalling. In terms of biological role, catalyzes the release of premature peptidyl moieties from peptidyl-tRNA molecules trapped in stalled 50S ribosomal subunits, and thus maintains levels of free tRNAs and 50S ribosomes. In Lawsonia intracellularis (strain PHE/MN1-00), this protein is Peptidyl-tRNA hydrolase.